We begin with the raw amino-acid sequence, 203 residues long: Small ribosomal subunit protein uS4 (203 aa).

Positions 93–154 (RRLDNVVYRC…KSRNLDAVAD (62 aa)) constitute an S4 RNA-binding domain.

This sequence belongs to the universal ribosomal protein uS4 family. Part of the 30S ribosomal subunit. Contacts protein S5. The interaction surface between S4 and S5 is involved in control of translational fidelity.

Its function is as follows. One of the primary rRNA binding proteins, it binds directly to 16S rRNA where it nucleates assembly of the body of the 30S subunit. Functionally, with S5 and S12 plays an important role in translational accuracy. The polypeptide is Small ribosomal subunit protein uS4 (Chlorobaculum tepidum (strain ATCC 49652 / DSM 12025 / NBRC 103806 / TLS) (Chlorobium tepidum)).